The following is a 413-amino-acid chain: Serine hydroxymethyltransferase (413 aa).

Residues Leu-116 and 120-122 (GHL) contribute to the (6S)-5,6,7,8-tetrahydrofolate site. Lys-225 carries the N6-(pyridoxal phosphate)lysine modification. 349–351 (SPF) contributes to the (6S)-5,6,7,8-tetrahydrofolate binding site.

Belongs to the SHMT family. As to quaternary structure, homodimer. Requires pyridoxal 5'-phosphate as cofactor.

The protein localises to the cytoplasm. The enzyme catalyses (6R)-5,10-methylene-5,6,7,8-tetrahydrofolate + glycine + H2O = (6S)-5,6,7,8-tetrahydrofolate + L-serine. Its pathway is one-carbon metabolism; tetrahydrofolate interconversion. It participates in amino-acid biosynthesis; glycine biosynthesis; glycine from L-serine: step 1/1. In terms of biological role, catalyzes the reversible interconversion of serine and glycine with tetrahydrofolate (THF) serving as the one-carbon carrier. This reaction serves as the major source of one-carbon groups required for the biosynthesis of purines, thymidylate, methionine, and other important biomolecules. Also exhibits THF-independent aldolase activity toward beta-hydroxyamino acids, producing glycine and aldehydes, via a retro-aldol mechanism. This Levilactobacillus brevis (strain ATCC 367 / BCRC 12310 / CIP 105137 / JCM 1170 / LMG 11437 / NCIMB 947 / NCTC 947) (Lactobacillus brevis) protein is Serine hydroxymethyltransferase.